A 749-amino-acid chain; its full sequence is Homeobox-leucine zipper protein ROC7 (749 aa).

The disordered stretch occupies residues 26–98 (LDQHQQHQHQ…KKRYHRHTQH (73 aa)). Over residues 46–57 (SDGRAPRDELEM) the composition is skewed to basic and acidic residues. Gly residues predominate over residues 68–79 (SGGGGGGGGSGG). Over residues 86–97 (RPRKKRYHRHTQ) the composition is skewed to basic residues. Residues 88 to 147 (RKKRYHRHTQHQIQELEAFFKECPHPDDKQRKELSRELGLEPLQVKFWFQNKRTQMKTQH) constitute a DNA-binding region (homeobox). A coiled-coil region spans residues 137 to 218 (QNKRTQMKTQ…DRISAIAAKY (82 aa)). The START domain maps to 256 to 494 (ADFDKPLVIE…LERQCERLAS (239 aa)).

The protein belongs to the HD-ZIP homeobox family. Class IV subfamily.

The protein resides in the nucleus. Probable transcription factor. The polypeptide is Homeobox-leucine zipper protein ROC7 (ROC7) (Oryza sativa subsp. japonica (Rice)).